A 312-amino-acid chain; its full sequence is MKSDKPFLERYFYDPTLLQKGLIFALYPFSLIYQGIATIKRKTAKKHDFKIPLISIGNLIAGGSGKTPFILEIAPRYQEVAIVSRGYQRDSKGLVVVSVKGNILVPQQTAGDEAYLLALNLKQASVIVSEKRELGVLKALELGAKIVFLDDGFRFNFNQFNALLKPKIPPYYPFCLPSGLYRESIKSYKEAHLVITEDKDYQRITSISHPTKRMLLVTAIANPSRLDAFLPKEVVKKLYFKDHALFDLKLLEKEFYQNSATSLLVTSKDLVKLQDCSLPLSVLDLKLEIDPKILEKIDRYILSYPCNTKERL.

60-67 (IAGGSGKT) contributes to the ATP binding site.

The protein belongs to the LpxK family.

It catalyses the reaction a lipid A disaccharide + ATP = a lipid IVA + ADP + H(+). The protein operates within glycolipid biosynthesis; lipid IV(A) biosynthesis; lipid IV(A) from (3R)-3-hydroxytetradecanoyl-[acyl-carrier-protein] and UDP-N-acetyl-alpha-D-glucosamine: step 6/6. Functionally, transfers the gamma-phosphate of ATP to the 4'-position of a tetraacyldisaccharide 1-phosphate intermediate (termed DS-1-P) to form tetraacyldisaccharide 1,4'-bis-phosphate (lipid IVA). The polypeptide is Tetraacyldisaccharide 4'-kinase (Helicobacter pylori (strain HPAG1)).